Reading from the N-terminus, the 251-residue chain is Eukaryotic translation initiation factor 3 subunit K (251 aa).

The region spanning F46–E224 is the PCI domain.

This sequence belongs to the eIF-3 subunit K family. In terms of assembly, component of the eukaryotic translation initiation factor 3 (eIF-3) complex.

It is found in the cytoplasm. Functionally, component of the eukaryotic translation initiation factor 3 (eIF-3) complex, which is involved in protein synthesis of a specialized repertoire of mRNAs and, together with other initiation factors, stimulates binding of mRNA and methionyl-tRNAi to the 40S ribosome. The eIF-3 complex specifically targets and initiates translation of a subset of mRNAs involved in cell proliferation. This is Eukaryotic translation initiation factor 3 subunit K from Aspergillus oryzae (strain ATCC 42149 / RIB 40) (Yellow koji mold).